Reading from the N-terminus, the 526-residue chain is WRKY transcription factor 72A (526 aa).

Composition is skewed to basic and acidic residues over residues 40 to 52 (KERK…DDNS) and 60 to 76 (LTGD…KADM). Disordered stretches follow at residues 40–76 (KERK…KADM) and 170–200 (SSTK…QTWP). Positions 62 to 106 (GDKKDDQLESAKADMEEVMEENQRLKKHLDKIMKDYRNLQMQFHE) form a coiled coil. A compositionally biased stretch (low complexity) spans 170–185 (SSTKSSPSNLSPENSL). A DNA-binding region (WRKY) is located at residues 232-298 (CDTPTMNDGC…YEGTHNHPLP (67 aa)).

This sequence belongs to the WRKY group II-b family. As to expression, expressed in roots, trichomes and fruits.

The protein resides in the nucleus. Functionally, transcription activator involved in the transcriptional regulation of terpene biosynthesis in glandular trichomes. Binds to the promoter of the linalool synthase TPS5 and promotes TPS5 gene transactivation. In association with WRKY72B, contributes to basal defense against root-knot nematodes (RKNs) and potato aphids, as well as Mi-1-mediated gene-for-gene resistance to these pests. Both WRKY72A and WRKY72B are not required for gene-for-gene resistance mediated by Pto, another tomato R gene. The chain is WRKY transcription factor 72A from Solanum lycopersicum (Tomato).